A 337-amino-acid polypeptide reads, in one-letter code: Lipoyl synthase (337 aa).

Cys-81, Cys-86, Cys-92, Cys-107, Cys-111, Cys-114, and Ser-323 together coordinate [4Fe-4S] cluster. In terms of domain architecture, Radical SAM core spans 93–312; the sequence is FSHGTATFMI…EDYGNALGFS (220 aa).

The protein belongs to the radical SAM superfamily. Lipoyl synthase family. It depends on [4Fe-4S] cluster as a cofactor.

Its subcellular location is the cytoplasm. The catalysed reaction is [[Fe-S] cluster scaffold protein carrying a second [4Fe-4S](2+) cluster] + N(6)-octanoyl-L-lysyl-[protein] + 2 oxidized [2Fe-2S]-[ferredoxin] + 2 S-adenosyl-L-methionine + 4 H(+) = [[Fe-S] cluster scaffold protein] + N(6)-[(R)-dihydrolipoyl]-L-lysyl-[protein] + 4 Fe(3+) + 2 hydrogen sulfide + 2 5'-deoxyadenosine + 2 L-methionine + 2 reduced [2Fe-2S]-[ferredoxin]. It participates in protein modification; protein lipoylation via endogenous pathway; protein N(6)-(lipoyl)lysine from octanoyl-[acyl-carrier-protein]: step 2/2. Catalyzes the radical-mediated insertion of two sulfur atoms into the C-6 and C-8 positions of the octanoyl moiety bound to the lipoyl domains of lipoate-dependent enzymes, thereby converting the octanoylated domains into lipoylated derivatives. The polypeptide is Lipoyl synthase (Xanthomonas axonopodis pv. citri (strain 306)).